The sequence spans 253 residues: uncharacterized protein (253 aa).

The 207-residue stretch at 30–236 folds into the BPL/LPL catalytic domain; sequence AQGRQVAQLW…AVDDDAALMA (207 aa).

This is an uncharacterized protein from Cupriavidus necator (strain ATCC 17699 / DSM 428 / KCTC 22496 / NCIMB 10442 / H16 / Stanier 337) (Ralstonia eutropha).